A 131-amino-acid chain; its full sequence is Small ribosomal subunit protein bS6 (131 aa).

Residues 96-131 (VTAPSPMMKEEKSKSLLAKDEAAAPAPAPATEQATA) form a disordered region. Residues 103–117 (MKEEKSKSLLAKDEA) are compositionally biased toward basic and acidic residues. Residues 118–131 (AAPAPAPATEQATA) are compositionally biased toward low complexity.

Belongs to the bacterial ribosomal protein bS6 family.

Binds together with bS18 to 16S ribosomal RNA. In Methylobacillus flagellatus (strain ATCC 51484 / DSM 6875 / VKM B-1610 / KT), this protein is Small ribosomal subunit protein bS6.